The following is a 98-amino-acid chain: NADH-ubiquinone oxidoreductase chain 4L (98 aa).

3 helical membrane-spanning segments follow: residues 2-22 (TQAS…TLIF), 29-49 (TLLC…MTAL), and 61-81 (IVML…LAMI).

This sequence belongs to the complex I subunit 4L family. As to quaternary structure, core subunit of respiratory chain NADH dehydrogenase (Complex I) which is composed of 45 different subunits.

The protein resides in the mitochondrion inner membrane. The catalysed reaction is a ubiquinone + NADH + 5 H(+)(in) = a ubiquinol + NAD(+) + 4 H(+)(out). Its function is as follows. Core subunit of the mitochondrial membrane respiratory chain NADH dehydrogenase (Complex I) which catalyzes electron transfer from NADH through the respiratory chain, using ubiquinone as an electron acceptor. Part of the enzyme membrane arm which is embedded in the lipid bilayer and involved in proton translocation. In Calomys musculinus (Drylands vesper mouse), this protein is NADH-ubiquinone oxidoreductase chain 4L (MT-ND4L).